A 576-amino-acid chain; its full sequence is Sodium/proton antiporter 1 (576 aa).

The transit peptide at 1 to 60 (MAVFPIGSHFAPPHQLTKRHVIATSSPISISTRLPQNVSFSKVSGVTGSTRLSKHGVLVR) directs the protein to the chloroplast. A run of 9 helical transmembrane segments spans residues 237–257 (TLLW…DNLT), 279–299 (LGGV…IGDV), 320–340 (FLPS…TSEV), 357–377 (APRG…VPVF), 379–399 (ALTG…LWIL), 426–446 (GALF…AGIL), 462–482 (LIAS…LVAA), 501–521 (LIAF…AAGV), and 541–561 (FAFA…NLHF).

The protein belongs to the NhaD Na(+)/H(+) (TC 2.A.62) antiporter family. In terms of tissue distribution, mostly expressed in mature and senescent leaves, and, to a lower extent, in seeds, roots, shoots, flowers and developing siliques.

It is found in the plastid. Its subcellular location is the chloroplast membrane. The protein resides in the chloroplast envelope. In terms of biological role, na(+)/H(+) antiporter that extrudes sodium in exchange for external protons. This chain is Sodium/proton antiporter 1, found in Arabidopsis thaliana (Mouse-ear cress).